Here is a 151-residue protein sequence, read N- to C-terminus: 3-hydroxyacyl-[acyl-carrier-protein] dehydratase FabZ (151 aa).

His57 is an active-site residue.

It belongs to the thioester dehydratase family. FabZ subfamily.

The protein resides in the cytoplasm. It carries out the reaction a (3R)-hydroxyacyl-[ACP] = a (2E)-enoyl-[ACP] + H2O. Functionally, involved in unsaturated fatty acids biosynthesis. Catalyzes the dehydration of short chain beta-hydroxyacyl-ACPs and long chain saturated and unsaturated beta-hydroxyacyl-ACPs. The polypeptide is 3-hydroxyacyl-[acyl-carrier-protein] dehydratase FabZ (Synechococcus sp. (strain CC9605)).